Reading from the N-terminus, the 214-residue chain is MIGFLQGKVLNLEADNVLLLVNQVGYEILLPATVVASVQNKLSDEFLNLYIYYHQTDRQPKPVLIGFDSAEEKDFFQLFITVDAIGPLKAAKAMEHSVSTIARAIENKDVAFLATLKGIGRRTAQKIVAALHGKAGRFLLAADEAGAGDGVSKTGTPSLPIQKAIDQVVDVLVQQLGHTPSAAKMMVAQALDRDPEIMTPEALFDEVYKGDVDA.

The tract at residues 1-68 (MIGFLQGKVL…QPKPVLIGFD (68 aa)) is domain I. The segment at 69 to 146 (SAEEKDFFQL…RFLLAADEAG (78 aa)) is domain II. Residues 147–160 (AGDGVSKTGTPSLP) form a flexible linker region. Residues 161 to 214 (IQKAIDQVVDVLVQQLGHTPSAAKMMVAQALDRDPEIMTPEALFDEVYKGDVDA) form a domain III region.

This sequence belongs to the RuvA family. In terms of assembly, homotetramer. Forms an RuvA(8)-RuvB(12)-Holliday junction (HJ) complex. HJ DNA is sandwiched between 2 RuvA tetramers; dsDNA enters through RuvA and exits via RuvB. An RuvB hexamer assembles on each DNA strand where it exits the tetramer. Each RuvB hexamer is contacted by two RuvA subunits (via domain III) on 2 adjacent RuvB subunits; this complex drives branch migration. In the full resolvosome a probable DNA-RuvA(4)-RuvB(12)-RuvC(2) complex forms which resolves the HJ.

It is found in the cytoplasm. Its function is as follows. The RuvA-RuvB-RuvC complex processes Holliday junction (HJ) DNA during genetic recombination and DNA repair, while the RuvA-RuvB complex plays an important role in the rescue of blocked DNA replication forks via replication fork reversal (RFR). RuvA specifically binds to HJ cruciform DNA, conferring on it an open structure. The RuvB hexamer acts as an ATP-dependent pump, pulling dsDNA into and through the RuvAB complex. HJ branch migration allows RuvC to scan DNA until it finds its consensus sequence, where it cleaves and resolves the cruciform DNA. The protein is Holliday junction branch migration complex subunit RuvA of Desulforapulum autotrophicum (strain ATCC 43914 / DSM 3382 / VKM B-1955 / HRM2) (Desulfobacterium autotrophicum).